The primary structure comprises 164 residues: Transcription factor MafF (164 aa).

The interval 51 to 76 (RLKQRRRTLKNRGYAASCRVKRVCQK) is basic motif. The region spanning 51–114 (RLKQRRRTLK…DALRGKCEAL (64 aa)) is the bZIP domain. Residues 79 to 93 (LQKQKSELEREVDKL) form a leucine-zipper region. The interval 141 to 164 (KSTPGSGSGPAHGPDPAHGPASCS) is disordered. The segment covering 149 to 164 (GPAHGPDPAHGPASCS) has biased composition (low complexity).

Belongs to the bZIP family. Maf subfamily. In terms of assembly, monomer and homo- or heterodimer. Interacts with MIP. Forms high affinity heterodimers with members of the CNC-bZIP family such as NFE2L1/NRF1. As to expression, expressed in the term myometrium and kidney.

The protein resides in the nucleus. In terms of biological role, since they lack a putative transactivation domain, the small Mafs behave as transcriptional repressors when they dimerize among themselves. However, they seem to serve as transcriptional activators by dimerizing with other (usually larger) basic-zipper proteins, such as NFE2L1/NRF1, and recruiting them to specific DNA-binding sites. Interacts with the upstream promoter region of the oxytocin receptor gene. May be a transcriptional enhancer in the up-regulation of the oxytocin receptor gene at parturition. This Homo sapiens (Human) protein is Transcription factor MafF (MAFF).